We begin with the raw amino-acid sequence, 453 residues long: Ankyrin repeat and SOCS box protein 16 (453 aa).

ANK repeat units lie at residues 56–85, 110–139, 142–171, 175–204, 209–238, 242–279, and 283–312; these read CRDP…AANM, KQTA…ELDA, GGRA…KANV, EGTT…TVNL, SQET…DVGL, QGET…DARA, and KRHT…RAEV. One can recognise an SOCS box domain in the interval 398–450; that stretch reads YSSALCMVNQPRQLQHLARLAVRARLGSRCRQGATRLPLPPLLRDYLLLRVEG.

The protein belongs to the ankyrin SOCS box (ASB) family.

The protein operates within protein modification; protein ubiquitination. May be a substrate-recognition component of a SCF-like ECS (Elongin-Cullin-SOCS-box protein) E3 ubiquitin-protein ligase complex which mediates the ubiquitination and subsequent proteasomal degradation of target proteins. This is Ankyrin repeat and SOCS box protein 16 (ASB16) from Homo sapiens (Human).